The primary structure comprises 896 residues: Protein translocase subunit SecA (896 aa).

ATP contacts are provided by residues Gln87, 105 to 109, and Asp507; that span reads GEGKT. Residues 853-879 are disordered; sequence ESLSENDEASETQTFRRQEKKIGRNDP. A compositionally biased stretch (basic and acidic residues) spans 866–876; the sequence is TFRRQEKKIGR. Zn(2+) is bound by residues Cys880, Cys882, Cys891, and His892.

This sequence belongs to the SecA family. Monomer and homodimer. Part of the essential Sec protein translocation apparatus which comprises SecA, SecYEG and auxiliary proteins SecDF-YajC and YidC. Requires Zn(2+) as cofactor.

Its subcellular location is the cell inner membrane. The protein resides in the cytoplasm. It carries out the reaction ATP + H2O + cellular proteinSide 1 = ADP + phosphate + cellular proteinSide 2.. In terms of biological role, part of the Sec protein translocase complex. Interacts with the SecYEG preprotein conducting channel. Has a central role in coupling the hydrolysis of ATP to the transfer of proteins into and across the cell membrane, serving both as a receptor for the preprotein-SecB complex and as an ATP-driven molecular motor driving the stepwise translocation of polypeptide chains across the membrane. In Legionella pneumophila (strain Corby), this protein is Protein translocase subunit SecA.